The following is a 169-amino-acid chain: MPDVDRFGRLPWLWITVLVFVLDQVSKAFFQAELSMYQQIVVIPDLFSWTLAYNTGAAFSFLADSSGWQRWLFALIAIVVSASLVVWLKRLKKGETWLAIALALVLGGALGNLYDRMVLGHVVDFILVHWQNRWYFPAFNLADSAITVGAVMLALDMFRSKKSGEAAHG.

The Cytoplasmic portion of the chain corresponds to 1 to 9 (MPDVDRFGR). A helical membrane pass occupies residues 10–30 (LPWLWITVLVFVLDQVSKAFF). Residues 31–67 (QAELSMYQQIVVIPDLFSWTLAYNTGAAFSFLADSSG) are Periplasmic-facing. Residues 68–89 (WQRWLFALIAIVVSASLVVWLK) traverse the membrane as a helical segment. Topologically, residues 90 to 96 (RLKKGET) are cytoplasmic. The chain crosses the membrane as a helical span at residues 97 to 118 (WLAIALALVLGGALGNLYDRMV). Topologically, residues 119 to 140 (LGHVVDFILVHWQNRWYFPAFN) are periplasmic. Residues Asp124 and Asp143 contribute to the active site. A helical transmembrane segment spans residues 141 to 154 (LADSAITVGAVMLA). The Cytoplasmic segment spans residues 155–169 (LDMFRSKKSGEAAHG).

The protein belongs to the peptidase A8 family. As to quaternary structure, monomer in the crystal.

Its subcellular location is the cell inner membrane. The enzyme catalyses Release of signal peptides from bacterial membrane prolipoproteins. Hydrolyzes -Xaa-Yaa-Zaa-|-(S,diacylglyceryl)Cys-, in which Xaa is hydrophobic (preferably Leu), and Yaa (Ala or Ser) and Zaa (Gly or Ala) have small, neutral side chains.. It participates in protein modification; lipoprotein biosynthesis (signal peptide cleavage). With respect to regulation, inhibited by globomycin. Functionally, this protein specifically catalyzes the removal of signal peptides from prolipoproteins. This is Lipoprotein signal peptidase from Pseudomonas aeruginosa (strain ATCC 15692 / DSM 22644 / CIP 104116 / JCM 14847 / LMG 12228 / 1C / PRS 101 / PAO1).